The chain runs to 812 residues: MKEFPKNYNFTENEKKWQQIWQEKQIYAYNPNAAKEETYVIDTPPPTVSGQLHIGHVYSYTQTDFIVRFQRMMGKNIFYPMGFDDNGLPTERLVEKQKQIKAYNMDRSEFIKICEEVVESEEEKFRSLFNQIALSVDWSLEYQTISPLSRKISQMSFLDLVQKEEIYRTNQPILWDPVDGTALAQADIEDKEKTSFMNYITFKTEQGDPLTIATTRPELLPACVAVFYHPDDGRYKHLAGKSAITPLFNEQVPLLTDPLVRQDKGTGLVMCCTFGDQTDITWWKTHNLPLKTIITKKGTIDFQHETSIDGLKIKEARTKIIDILKEQELLIKQEDITHTVKCAERSGAPLEILTVPQWFVKTISHKEELLKRANELNWHPKHMKIRLENWINAISWDWCISRQRYFGVPFPVWYSKRVGEEGKILYADVTQLPIDPLKDLPMGYSKEEVEPDYDVMDTWATSSVSPQLSTHGISDDFAVNKDRHDKLFPMDLRPQAHEIIRTWAFYTILKAHLHQNTLPWKNIMVSGWCLAEDRSKMSKSKGNVLVPEKLLEQYGSDVIRYWSANSKLGADTAYSEDVMKNGKRLVNKLWNAAKFVFIHFDKLKGEDKKASLLDIKEKITNEFDKWMVNKLVELVKLATNELQNYEYANAMHLTEKFFWVVLCDNYLEISKTRSYDEEHKNPQGQYSSILTLYHVMQTLLKLFAPFMPHITEELYQILYSENSIHVKGSWVNYSDLNYEINAKGAEGLLEILDIVRKFKAEKNLSIKTPIKLLEVSGIVLSAELTEDLKNVTSAEEIQFEMKDDKIKVNIIL.

Residues 46–56 (PTVSGQLHIGH) carry the 'HIGH' region motif. Residues 536–540 (KMSKS) carry the 'KMSKS' region motif. Residue K539 participates in ATP binding.

This sequence belongs to the class-I aminoacyl-tRNA synthetase family. ValS type 2 subfamily. As to quaternary structure, monomer.

The protein localises to the cytoplasm. The enzyme catalyses tRNA(Val) + L-valine + ATP = L-valyl-tRNA(Val) + AMP + diphosphate. In terms of biological role, catalyzes the attachment of valine to tRNA(Val). As ValRS can inadvertently accommodate and process structurally similar amino acids such as threonine, to avoid such errors, it has a 'posttransfer' editing activity that hydrolyzes mischarged Thr-tRNA(Val) in a tRNA-dependent manner. The chain is Valine--tRNA ligase from Rickettsia conorii (strain ATCC VR-613 / Malish 7).